Consider the following 281-residue polypeptide: Inhibitor of growth protein 2 (281 aa).

Residues 49–101 (VLRELDNKYQETLKEIDDVYEKYKKEDDSNQKKRLQQHLQRALINSQELGDEK) adopt a coiled-coil conformation. The tract at residues 123-204 (SQCFQDPAES…AKQEREASPV (82 aa)) is disordered. Basic and acidic residues predominate over residues 131–141 (ESERASDKSKM). A compositionally biased stretch (basic residues) spans 182-194 (KRSKSAKKKKRSK). Residue K196 forms a Glycyl lysine isopeptide (Lys-Gly) (interchain with G-Cter in SUMO1) linkage. A PHD-type zinc finger spans residues 213-262 (PTYCLCNQVSYGEMIGCDNEQCPIEWFHFSCVSLTYKPKGKWYCPKCRGD). Residues C216, C218, C229, C234, H240, C243, C256, and C259 each contribute to the Zn(2+) site. Residues 261 to 275 (GDNEKTMDKSTEKTK) show a composition bias toward basic and acidic residues. Positions 261–281 (GDNEKTMDKSTEKTKKERRAR) are disordered. The tract at residues 265 to 281 (KTMDKSTEKTKKERRAR) is PBR.

The protein belongs to the ING family. As to quaternary structure, interacts with H3K4me3 and to a lesser extent with H3K4me2. Component of a mSin3A-like complex at least consisting of SIN3A, HDAC1, HDAC2, RBBP4/RbAp48, RBBP7/RbAp46, SAP30 and ING2. Sumoylation enhances its association with SIN3A and is required for binding to some target gene promoters, this is the case for TMEM71.

The protein resides in the nucleus. Functionally, seems to be involved in p53/TP53 activation and p53/TP53-dependent apoptotic pathways, probably by enhancing acetylation of p53/TP53. Component of a mSin3A-like corepressor complex, which is probably involved in deacetylation of nucleosomal histones. ING2 activity seems to be modulated by binding to phosphoinositides (PtdInsPs). The sequence is that of Inhibitor of growth protein 2 (Ing2) from Mus musculus (Mouse).